A 461-amino-acid polypeptide reads, in one-letter code: uncharacterized protein (461 aa).

Disordered regions lie at residues 254–273 and 368–414; these read NNNNNNNNNNNNNNNNNNNN and QPSQ…NNNS. Residues 381–413 are compositionally biased toward low complexity; that stretch reads NNNNNNNNNNNNNNNNNNNNNNNNNNNNNNNNN.

This is an uncharacterized protein from Dictyostelium discoideum (Social amoeba).